A 193-amino-acid chain; its full sequence is Peptidyl-tRNA hydrolase (193 aa).

Tyr17 is a binding site for tRNA. His22 serves as the catalytic Proton acceptor. The tRNA site is built by Phe68, Asn70, and Asn116.

Belongs to the PTH family. Monomer.

Its subcellular location is the cytoplasm. The enzyme catalyses an N-acyl-L-alpha-aminoacyl-tRNA + H2O = an N-acyl-L-amino acid + a tRNA + H(+). Its function is as follows. Hydrolyzes ribosome-free peptidyl-tRNAs (with 1 or more amino acids incorporated), which drop off the ribosome during protein synthesis, or as a result of ribosome stalling. Catalyzes the release of premature peptidyl moieties from peptidyl-tRNA molecules trapped in stalled 50S ribosomal subunits, and thus maintains levels of free tRNAs and 50S ribosomes. This is Peptidyl-tRNA hydrolase from Acinetobacter baylyi (strain ATCC 33305 / BD413 / ADP1).